The primary structure comprises 143 residues: Nucleoside diphosphate kinase (143 aa).

Lys11, Phe59, Arg87, Thr93, Arg104, and Asn114 together coordinate ATP. The active-site Pros-phosphohistidine intermediate is His117.

This sequence belongs to the NDK family. In terms of assembly, homotetramer. Mg(2+) is required as a cofactor.

Its subcellular location is the cytoplasm. The catalysed reaction is dZDP + ATP = dZTP + ADP. It carries out the reaction a 2'-deoxyribonucleoside 5'-diphosphate + ATP = a 2'-deoxyribonucleoside 5'-triphosphate + ADP. It catalyses the reaction a ribonucleoside 5'-diphosphate + ATP = a ribonucleoside 5'-triphosphate + ADP. It participates in purine metabolism. In terms of biological role, major role in the synthesis of nucleoside triphosphates other than ATP. The ATP gamma phosphate is transferred to the NDP beta phosphate via a ping-pong mechanism, using a phosphorylated active-site intermediate. (Microbial infection) Catalyzes the phosphorylation of dZDP to dZTP, when the bacterium is infected by a phage that produces the substrate for the synthesis of dZTP (2- amino-2'-deoxyadenosine 5'-triphosphate), which is then used by the phage as a DNA polymerase substrate. This chain is Nucleoside diphosphate kinase, found in Salmonella paratyphi C (strain RKS4594).